We begin with the raw amino-acid sequence, 391 residues long: Period circadian protein (391 aa).

Disordered stretches follow at residues 27–121, 163–188, 241–270, and 328–357; these read VTAP…PPVT, MLEY…WEGE, GSSA…QFTQ, and SPSG…TSQA. The span at 93-114 shows a compositional bias: gly residues; sequence GTSGTGNSGDGGGGGGADGPGS. Gly residues predominate over residues 241–255; that stretch reads GSSAGGNGSGTGNNN.

Forms a heterodimer with timeless (TIM); the complex then translocates into the nucleus. Phosphorylated with a circadian rhythmicity, probably by the double-time protein (dbt). Phosphorylation could be implicated in the stability of per monomer and in the formation of heterodimer per-tim.

It is found in the nucleus. It localises to the cytoplasm. The protein localises to the perinuclear region. Functionally, essential for biological clock functions. Determines the period length of circadian and ultradian rhythms; an increase in PER dosage leads to shortened circadian rhythms and a decrease leads to lengthened circadian rhythms. Essential for the circadian rhythmicity of locomotor activity, eclosion behavior, and for the rhythmic component of the male courtship song that originates in the thoracic nervous system. The biological cycle depends on the rhythmic formation and nuclear localization of the TIM-PER complex. Light induces the degradation of TIM, which promotes elimination of PER. Nuclear activity of the heterodimer coordinatively regulates PER and TIM transcription through a negative feedback loop. Behaves as a negative element in circadian transcriptional loop. Does not appear to bind DNA, suggesting indirect transcriptional inhibition. In Drosophila insularis (Fruit fly), this protein is Period circadian protein (per).